Reading from the N-terminus, the 410-residue chain is Probable peptidoglycan glycosyltransferase FtsW (410 aa).

9 consecutive transmembrane segments (helical) span residues 39-59, 78-98, 108-128, 177-197, 198-218, 221-241, 303-323, 342-362, and 374-394; these read LDPL…VMVY, YFLL…LAAF, FAPW…IPGV, GFLP…GEPD, FGAF…GGIN, VFAL…WLSP, IAEE…AILI, GLVA…NMGV, and LPLM…LAIL.

It belongs to the SEDS family. FtsW subfamily.

It localises to the cell inner membrane. It catalyses the reaction [GlcNAc-(1-&gt;4)-Mur2Ac(oyl-L-Ala-gamma-D-Glu-L-Lys-D-Ala-D-Ala)](n)-di-trans,octa-cis-undecaprenyl diphosphate + beta-D-GlcNAc-(1-&gt;4)-Mur2Ac(oyl-L-Ala-gamma-D-Glu-L-Lys-D-Ala-D-Ala)-di-trans,octa-cis-undecaprenyl diphosphate = [GlcNAc-(1-&gt;4)-Mur2Ac(oyl-L-Ala-gamma-D-Glu-L-Lys-D-Ala-D-Ala)](n+1)-di-trans,octa-cis-undecaprenyl diphosphate + di-trans,octa-cis-undecaprenyl diphosphate + H(+). The protein operates within cell wall biogenesis; peptidoglycan biosynthesis. Peptidoglycan polymerase that is essential for cell division. This chain is Probable peptidoglycan glycosyltransferase FtsW, found in Aromatoleum aromaticum (strain DSM 19018 / LMG 30748 / EbN1) (Azoarcus sp. (strain EbN1)).